Here is a 633-residue protein sequence, read N- to C-terminus: Threonine--tRNA ligase (633 aa).

The TGS domain maps to 1-61; it reads MINVYFSDNS…TEDCKFEVIT (61 aa). Residues 242–533 are catalytic; that stretch reads DHRKIGKELE…LIEHHSGKLP (292 aa). Zn(2+) is bound by residues cysteine 333, histidine 384, and histidine 510.

This sequence belongs to the class-II aminoacyl-tRNA synthetase family. In terms of assembly, homodimer. The cofactor is Zn(2+).

It localises to the cytoplasm. The catalysed reaction is tRNA(Thr) + L-threonine + ATP = L-threonyl-tRNA(Thr) + AMP + diphosphate + H(+). Functionally, catalyzes the attachment of threonine to tRNA(Thr) in a two-step reaction: L-threonine is first activated by ATP to form Thr-AMP and then transferred to the acceptor end of tRNA(Thr). Also edits incorrectly charged L-seryl-tRNA(Thr). The sequence is that of Threonine--tRNA ligase from Ehrlichia ruminantium (strain Welgevonden).